A 156-amino-acid chain; its full sequence is Calmodulin (156 aa).

Position 2 is an N-acetylserine (Ser2). 4 consecutive EF-hand domains span residues 15-50 (EQIA…LGQN), 51-86 (PTEA…KMKD), 88-123 (DSEE…LGEK), and 124-156 (LTDE…MTSK). Residues Asp28, Asp30, Asp32, Thr34, Glu39, Asp64, Asp66, Asn68, Thr70, Glu75, Asp101, Asp103, Asn105, and Glu112 each contribute to the Ca(2+) site. The residue at position 123 (Lys123) is an N6,N6,N6-trimethyllysine. Residues Asp137, Asp139, Asp141, Gln143, and Glu148 each coordinate Ca(2+).

Belongs to the calmodulin family.

Functionally, calmodulin mediates the control of a large number of enzymes, ion channels and other proteins by Ca(2+). Among the enzymes to be stimulated by the calmodulin-Ca(2+) complex are a number of protein kinases and phosphatases. This is Calmodulin from Strongylocentrotus intermedius (Sea urchin).